The primary structure comprises 148 residues: Vascular endothelial growth factor homolog (148 aa).

The first 25 residues, 1–25 (MKLTATLQVVVALLICMYNLPECVS), serve as a signal peptide directing secretion. Cystine bridges form between Cys-46/Cys-88, Cys-77/Cys-130, and Cys-81/Cys-132. Asn-95 carries N-linked (GlcNAc...) asparagine; by host glycosylation.

This sequence belongs to the PDGF/VEGF growth factor family. As to quaternary structure, homodimer; disulfide-linked.

It localises to the secreted. Functionally, induces endothelial proliferation. This is Vascular endothelial growth factor homolog from Orf virus (strain NZ7) (OV NZ-7).